A 42-amino-acid polypeptide reads, in one-letter code: Conotoxin Au11.6 (42 aa).

4 disulfide bridges follow: Cys-6–Cys-20, Cys-13–Cys-25, Cys-19–Cys-30, and Cys-24–Cys-37.

The protein belongs to the conotoxin I1 superfamily. Expressed by the venom duct.

It localises to the secreted. The sequence is that of Conotoxin Au11.6 from Conus aulicus (Princely cone).